The chain runs to 356 residues: UDP-N-acetylglucosamine--N-acetylmuramyl-(pentapeptide) pyrophosphoryl-undecaprenol N-acetylglucosamine transferase (356 aa).

Residues 15–17 (TGG), Asn-127, Arg-163, Ser-191, Ile-244, 263–268 (ALTVSE), and Gln-288 contribute to the UDP-N-acetyl-alpha-D-glucosamine site.

It belongs to the glycosyltransferase 28 family. MurG subfamily.

It localises to the cell inner membrane. The catalysed reaction is di-trans,octa-cis-undecaprenyl diphospho-N-acetyl-alpha-D-muramoyl-L-alanyl-D-glutamyl-meso-2,6-diaminopimeloyl-D-alanyl-D-alanine + UDP-N-acetyl-alpha-D-glucosamine = di-trans,octa-cis-undecaprenyl diphospho-[N-acetyl-alpha-D-glucosaminyl-(1-&gt;4)]-N-acetyl-alpha-D-muramoyl-L-alanyl-D-glutamyl-meso-2,6-diaminopimeloyl-D-alanyl-D-alanine + UDP + H(+). The protein operates within cell wall biogenesis; peptidoglycan biosynthesis. Its function is as follows. Cell wall formation. Catalyzes the transfer of a GlcNAc subunit on undecaprenyl-pyrophosphoryl-MurNAc-pentapeptide (lipid intermediate I) to form undecaprenyl-pyrophosphoryl-MurNAc-(pentapeptide)GlcNAc (lipid intermediate II). This is UDP-N-acetylglucosamine--N-acetylmuramyl-(pentapeptide) pyrophosphoryl-undecaprenol N-acetylglucosamine transferase from Yersinia pestis (strain Pestoides F).